Here is a 476-residue protein sequence, read N- to C-terminus: Adenosylhomocysteinase (476 aa).

Substrate is bound by residues Thr-67, Asp-142, and Glu-202. 203 to 205 (TTT) is an NAD(+) binding site. Residues Lys-232 and Asp-236 each coordinate substrate. Residues Asn-237, 266 to 271 (GYGDVG), Glu-289, Asn-324, 345 to 347 (IGH), and Asn-390 each bind NAD(+).

It belongs to the adenosylhomocysteinase family. It depends on NAD(+) as a cofactor.

The protein localises to the cytoplasm. It catalyses the reaction S-adenosyl-L-homocysteine + H2O = L-homocysteine + adenosine. It participates in amino-acid biosynthesis; L-homocysteine biosynthesis; L-homocysteine from S-adenosyl-L-homocysteine: step 1/1. May play a key role in the regulation of the intracellular concentration of adenosylhomocysteine. The sequence is that of Adenosylhomocysteinase from Prochlorococcus marinus (strain SARG / CCMP1375 / SS120).